The sequence spans 192 residues: Cytochrome c oxidase assembly factor 8 (192 aa).

Residues 1-26 constitute a mitochondrion transit peptide; sequence MAALRPGSRALRRLLCRSFSGGGGVR.

Belongs to the COA8 family. Post-translationally, N-terminal mitochondrial targeting sequence is cleaved from the mature protein once in the mitochondrion. In terms of processing, in normal conditions, the cytoplasmic precursor protein is rapidly degraded by the ubiquitination-proteasome system (UPS). Oxidative stress induces protein stabilization and import into mitochondria where it protects COX from degradation. In terms of tissue distribution, expressed in atherosclerotic smooth muscle cells (at protein level). Expressed in aorta, brain, heart, kidney, liver, lung and spleen. Isoform 1 is strongly expressed in Kidney. Isoform 2 is strongly expressed in brain.

The protein localises to the mitochondrion inner membrane. Its function is as follows. Required for cytochrome c complex (COX) IV assembly and function Protects COX assembly from oxidation-induced degradation, COX being the terminal component of the mitochondrial respiratory chain. The sequence is that of Cytochrome c oxidase assembly factor 8 (Coa8) from Mus musculus (Mouse).